A 142-amino-acid polypeptide reads, in one-letter code: Fluoride-specific ion channel FluC 1 (142 aa).

The next 4 helical transmembrane spans lie at 17-37 (AWVS…GLAL), 42-62 (GFPF…GFYA), 80-100 (FVMT…LETF), and 109-129 (YIAL…VWLG). Na(+)-binding residues include Gly-87 and Thr-90.

Belongs to the fluoride channel Fluc/FEX (TC 1.A.43) family.

It localises to the cell inner membrane. It carries out the reaction fluoride(in) = fluoride(out). With respect to regulation, na(+) is not transported, but it plays an essential structural role and its presence is essential for fluoride channel function. Its function is as follows. Fluoride-specific ion channel. Important for reducing fluoride concentration in the cell, thus reducing its toxicity. The protein is Fluoride-specific ion channel FluC 1 of Bradyrhizobium diazoefficiens (strain JCM 10833 / BCRC 13528 / IAM 13628 / NBRC 14792 / USDA 110).